We begin with the raw amino-acid sequence, 66 residues long: Photosystem II reaction center protein J (66 aa).

Residues 1–23 (MSGNKSPFPDGRIPDRLPDGRPA) form a disordered region. A helical transmembrane segment spans residues 37–57 (LWLVATAGGMAVLFVVGLFFY).

It belongs to the PsbJ family. In terms of assembly, PSII is composed of 1 copy each of membrane proteins PsbA, PsbB, PsbC, PsbD, PsbE, PsbF, PsbH, PsbI, PsbJ, PsbK, PsbL, PsbM, PsbT, PsbX, PsbY, PsbZ, Psb30/Ycf12, peripheral proteins PsbO, CyanoQ (PsbQ), PsbU, PsbV and a large number of cofactors. It forms dimeric complexes.

The protein localises to the cellular thylakoid membrane. Its function is as follows. One of the components of the core complex of photosystem II (PSII). PSII is a light-driven water:plastoquinone oxidoreductase that uses light energy to abstract electrons from H(2)O, generating O(2) and a proton gradient subsequently used for ATP formation. It consists of a core antenna complex that captures photons, and an electron transfer chain that converts photonic excitation into a charge separation. The polypeptide is Photosystem II reaction center protein J (Parasynechococcus marenigrum (strain WH8102)).